The primary structure comprises 489 residues: Bifunctional protein HldE (489 aa).

A ribokinase region spans residues 1–330 (MFDFDGLSNA…RKILPPAFLA (330 aa)). 205 to 208 (NRKE) serves as a coordination point for ATP. D275 is a catalytic residue. The segment at 358–489 (FTNGCFDILH…SLVKRAGGRA (132 aa)) is cytidylyltransferase.

It in the N-terminal section; belongs to the carbohydrate kinase PfkB family. The protein in the C-terminal section; belongs to the cytidylyltransferase family. As to quaternary structure, homodimer.

The enzyme catalyses D-glycero-beta-D-manno-heptose 7-phosphate + ATP = D-glycero-beta-D-manno-heptose 1,7-bisphosphate + ADP + H(+). The catalysed reaction is D-glycero-beta-D-manno-heptose 1-phosphate + ATP + H(+) = ADP-D-glycero-beta-D-manno-heptose + diphosphate. It participates in nucleotide-sugar biosynthesis; ADP-L-glycero-beta-D-manno-heptose biosynthesis; ADP-L-glycero-beta-D-manno-heptose from D-glycero-beta-D-manno-heptose 7-phosphate: step 1/4. Its pathway is nucleotide-sugar biosynthesis; ADP-L-glycero-beta-D-manno-heptose biosynthesis; ADP-L-glycero-beta-D-manno-heptose from D-glycero-beta-D-manno-heptose 7-phosphate: step 3/4. Functionally, catalyzes the phosphorylation of D-glycero-D-manno-heptose 7-phosphate at the C-1 position to selectively form D-glycero-beta-D-manno-heptose-1,7-bisphosphate. Catalyzes the ADP transfer from ATP to D-glycero-beta-D-manno-heptose 1-phosphate, yielding ADP-D-glycero-beta-D-manno-heptose. This chain is Bifunctional protein HldE, found in Nitrobacter hamburgensis (strain DSM 10229 / NCIMB 13809 / X14).